The primary structure comprises 315 residues: Methionyl-tRNA formyltransferase (315 aa).

107 to 110 serves as a coordination point for (6S)-5,6,7,8-tetrahydrofolate; that stretch reads SLLP.

It belongs to the Fmt family.

It catalyses the reaction L-methionyl-tRNA(fMet) + (6R)-10-formyltetrahydrofolate = N-formyl-L-methionyl-tRNA(fMet) + (6S)-5,6,7,8-tetrahydrofolate + H(+). Attaches a formyl group to the free amino group of methionyl-tRNA(fMet). The formyl group appears to play a dual role in the initiator identity of N-formylmethionyl-tRNA by promoting its recognition by IF2 and preventing the misappropriation of this tRNA by the elongation apparatus. In Borrelia garinii subsp. bavariensis (strain ATCC BAA-2496 / DSM 23469 / PBi) (Borreliella bavariensis), this protein is Methionyl-tRNA formyltransferase.